The following is a 212-amino-acid chain: Guanylate kinase (212 aa).

The Guanylate kinase-like domain occupies 5–187 (GILCIISAPS…ALMHLQSIML (183 aa)). 12 to 19 (APSGTGKS) serves as a coordination point for ATP.

The protein belongs to the guanylate kinase family.

Its subcellular location is the cytoplasm. The catalysed reaction is GMP + ATP = GDP + ADP. In terms of biological role, essential for recycling GMP and indirectly, cGMP. This Blochmanniella pennsylvanica (strain BPEN) protein is Guanylate kinase.